Here is a 154-residue protein sequence, read N- to C-terminus: Keratin-associated protein 9-4 (154 aa).

15 tandem repeats follow at residues 8 to 12 (CCQPT), 13 to 17 (CCRTT), 18 to 22 (CCRTT), 37 to 41 (CCQPS), 42 to 46 (CCVSS), 51 to 55 (CCRPT), 56 to 60 (CCQNT), 61 to 65 (CCQPT), 70 to 74 (CCQPS), 75 to 79 (CCSTP), 80 to 84 (CCQPT), 85 to 89 (CCGSS), 129 to 133 (CCRPA), 134 to 138 (CCETT), and 148 to 152 (CCQPF). Residues 8-152 (CCQPTCCRTT…TCVSSCCQPF (145 aa)) are 15 X 5 AA repeats of C-C-[RQVGE]-[SPTN]-[TASPF].

It belongs to the KRTAP type 9 family. In terms of assembly, interacts with hair keratins.

In the hair cortex, hair keratin intermediate filaments are embedded in an interfilamentous matrix, consisting of hair keratin-associated proteins (KRTAP), which are essential for the formation of a rigid and resistant hair shaft through their extensive disulfide bond cross-linking with abundant cysteine residues of hair keratins. The matrix proteins include the high-sulfur and high-glycine-tyrosine keratins. The polypeptide is Keratin-associated protein 9-4 (KRTAP9-4) (Homo sapiens (Human)).